A 504-amino-acid polypeptide reads, in one-letter code: Maturase K (504 aa).

Belongs to the intron maturase 2 family. MatK subfamily.

Its subcellular location is the plastid. It is found in the chloroplast. In terms of biological role, usually encoded in the trnK tRNA gene intron. Probably assists in splicing its own and other chloroplast group II introns. The sequence is that of Maturase K from Wollastonia biflora (Beach sunflower).